A 260-amino-acid chain; its full sequence is Uroplakin-1b (260 aa).

Topologically, residues 1–15 are cytoplasmic; sequence MAKDNSTVRCFQGLL. Residues 16-36 form a helical membrane-spanning segment; that stretch reads IFGNVIIGCCGIALTAECIFF. Topologically, residues 37–60 are extracellular; sequence VSDQHSLYPLLEATDNDDIYGAAW. Residues 61-81 form a helical membrane-spanning segment; sequence IGIFVGICLFCLSVLGIVGIM. Over 82–86 the chain is Cytoplasmic; it reads KSSRK. Residues 87 to 107 form a helical membrane-spanning segment; it reads ILLAYFILMFIVYAFEVASCI. Residues 108–229 are Extracellular-facing; sequence TAATQQDFFT…ELISGPMNRH (122 aa). A helical transmembrane segment spans residues 230–250; sequence AWGVAWFGFAILCWTFWVLLG. Over 251–260 the chain is Cytoplasmic; the sequence is TMFYWSRIEY.

This sequence belongs to the tetraspanin (TM4SF) family. As to quaternary structure, heterodimer with uroplakin-3A (UPK3A) or uroplakin-3B (UPK3B). In terms of processing, N-glycosylated with high-mannose oligosaccharides. As to expression, bladder epithelium.

It is found in the membrane. Its function is as follows. Component of the asymmetric unit membrane (AUM); a highly specialized biomembrane elaborated by terminally differentiated urothelial cells. May play an important role in normal bladder epithelial physiology, possibly in regulating membrane permeability of superficial umbrella cells or in stabilizing the apical membrane through AUM/cytoskeletal interactions. This is Uroplakin-1b (UPK1B) from Homo sapiens (Human).